The chain runs to 906 residues: uncharacterized protein (906 aa).

Disordered regions lie at residues 231-322 (KEDA…PSTI) and 865-906 (AGAY…DEDE). The span at 236 to 250 (TTKQTTTTTTTTPQT) shows a compositional bias: low complexity. A compositionally biased stretch (pro residues) spans 264 to 281 (TPTPAPAPKPTTPKPTPA). Positions 302-314 (SVNNIPTPSDTNE) are enriched in polar residues. A compositionally biased stretch (acidic residues) spans 867–906 (AYEDDDDDEGEGNEDDEDNDENEDEDEGEGEGDSSEDEDE).

This is an uncharacterized protein from Dictyostelium sp. (strain GA11) (Slime mold).